The chain runs to 498 residues: MSTNPTSSRPGVSTIDEKNTGRIDQIIGPVLDVTFPPGKLPYIYNALVVQSRDTADKQINVTCEVQQLLGNNRVRAVAMSATDGLMRGMEVIDTGAPLSVPVGGATLGRIFNVLGEPVDNLGPVDSSATFPIHRSAPAFIELDTKLSIFETGIKVVDLLAPYRRGGKIGLFGGAGVGKTVLIMELINNIAKAHGGVSVFGGVGERTREGNDLYMEMKESGVINEKNIEESKVALVYGQMNEPPGARMRVGLTALTMAEYFRDVNKQDVLLFIDNIFRFVQAGSEVSALLGRMPSAVGYQPTLSTEMGSLQERIASTKKGSITSIQAVYVPADDLTDPAPATTFAHLDATTVLSRGLASKGIYPAVDPLDSTSTMLQPRIVGNEHYETAQRVKETLQRYKELQDIIAILGLDELSEEDRLTVARARKIERFLSQPFFVAEVFTGSPGKYVGLAETIRGFQLILSGELDGLPEQAFYLVGNIDEASTKAITLEEENKSKK.

172-179 (GGAGVGKT) contacts ATP.

Belongs to the ATPase alpha/beta chains family. In terms of assembly, F-type ATPases have 2 components, CF(1) - the catalytic core - and CF(0) - the membrane proton channel. CF(1) has five subunits: alpha(3), beta(3), gamma(1), delta(1), epsilon(1). CF(0) has four main subunits: a(1), b(1), b'(1) and c(9-12).

Its subcellular location is the plastid. The protein resides in the chloroplast thylakoid membrane. It carries out the reaction ATP + H2O + 4 H(+)(in) = ADP + phosphate + 5 H(+)(out). Functionally, produces ATP from ADP in the presence of a proton gradient across the membrane. The catalytic sites are hosted primarily by the beta subunits. In Agrostis stolonifera (Creeping bentgrass), this protein is ATP synthase subunit beta, chloroplastic.